The primary structure comprises 741 residues: G2 and S phase-expressed protein 1 (741 aa).

Position 73 is a phosphoserine (Ser-73). 3 disordered regions span residues 101–120 (EVAQ…ETFV), 131–428 (EKEQ…KTVS), and 450–512 (FKVP…STRR). Positions 106–120 (ATPQNPVNQGKETFV) are enriched in polar residues. The span at 131-147 (EKEQKRDRSPMSLKRET) shows a compositional bias: basic and acidic residues. Phosphoserine occurs at positions 139, 153, 191, and 245. The segment covering 173-209 (SPVSAGPAQTQSNQGLPCSSQPLPRESSTSQPPSQAG) has biased composition (polar residues). Residues 246 to 261 (IQRTKLVNEKGSQSDV) are compositionally biased toward polar residues. Residues 310–321 (SSTSGSASSLES) are compositionally biased toward low complexity. Ser-311 is modified (phosphoserine). A compositionally biased stretch (polar residues) spans 337-355 (QRSSIPASGSQRRTSTSKS). Over residues 360-372 (PAASRQALPAAPA) the composition is skewed to low complexity. The span at 398 to 408 (SPLTQQPQTPE) shows a compositional bias: polar residues. Residue Ser-460 is modified to Phosphoserine. At Thr-465 the chain carries Phosphothreonine. Phosphoserine occurs at positions 476, 493, 509, and 514. A compositionally biased stretch (low complexity) spans 478 to 497 (TPASRVVSSTPVRRSSGTTP). Residue Thr-518 is modified to Phosphothreonine. Residues Ser-521, Ser-541, Ser-582, and Ser-599 each carry the phosphoserine modification. The segment at 550–640 (LSSEPRRRST…VHGGGCSHTP (91 aa)) is disordered. Residues 578–593 (QGLSSDESSSPPSSVP) show a composition bias toward low complexity. Thr-696 is subject to Phosphothreonine. Ser-720, Ser-726, and Ser-736 each carry phosphoserine.

In terms of processing, phosphorylated in mitosis.

It is found in the cytoplasm. The protein resides in the cytoskeleton. Functionally, may be involved in p53-induced cell cycle arrest in G2/M phase by interfering with microtubule rearrangements that are required to enter mitosis. Overexpression delays G2/M phase progression. The chain is G2 and S phase-expressed protein 1 (Gtse1) from Mus musculus (Mouse).